The following is a 208-amino-acid chain: FMN-dependent NADH:quinone oxidoreductase 3 (208 aa).

This sequence belongs to the azoreductase type 1 family. In terms of assembly, homodimer. The cofactor is FMN.

The enzyme catalyses 2 a quinone + NADH + H(+) = 2 a 1,4-benzosemiquinone + NAD(+). The catalysed reaction is N,N-dimethyl-1,4-phenylenediamine + anthranilate + 2 NAD(+) = 2-(4-dimethylaminophenyl)diazenylbenzoate + 2 NADH + 2 H(+). Its function is as follows. Quinone reductase that provides resistance to thiol-specific stress caused by electrophilic quinones. In terms of biological role, also exhibits azoreductase activity. Catalyzes the reductive cleavage of the azo bond in aromatic azo compounds to the corresponding amines. The polypeptide is FMN-dependent NADH:quinone oxidoreductase 3 (Bacillus cereus (strain ATCC 14579 / DSM 31 / CCUG 7414 / JCM 2152 / NBRC 15305 / NCIMB 9373 / NCTC 2599 / NRRL B-3711)).